We begin with the raw amino-acid sequence, 158 residues long: Small ribosomal subunit protein uS7 (158 aa).

This sequence belongs to the universal ribosomal protein uS7 family. As to quaternary structure, part of the 30S ribosomal subunit. Contacts proteins S9 and S11.

In terms of biological role, one of the primary rRNA binding proteins, it binds directly to 16S rRNA where it nucleates assembly of the head domain of the 30S subunit. Is located at the subunit interface close to the decoding center, probably blocks exit of the E-site tRNA. In Flavobacterium johnsoniae (strain ATCC 17061 / DSM 2064 / JCM 8514 / BCRC 14874 / CCUG 350202 / NBRC 14942 / NCIMB 11054 / UW101) (Cytophaga johnsonae), this protein is Small ribosomal subunit protein uS7.